A 607-amino-acid chain; its full sequence is NAD-dependent malic enzyme 2, mitochondrial (607 aa).

Residues Met1–Pro32 constitute a mitochondrion transit peptide. Tyr136 acts as the Proton donor in catalysis. Arg189 serves as a coordination point for NAD(+). Lys207 functions as the Proton acceptor in the catalytic mechanism. A divalent metal cation-binding residues include Glu278, Asp279, and Asp302. Residues Asp302 and Asn449 each coordinate NAD(+).

This sequence belongs to the malic enzymes family. As to quaternary structure, homodimer. Heterodimer of two related subunits in NAD-MEH complex. Interacts with NAD-ME1. Mg(2+) serves as cofactor. The cofactor is Mn(2+). In terms of tissue distribution, expressed in leaves, stems, flowers, and roots (at protein level). Present in pollen.

The protein resides in the mitochondrion. The catalysed reaction is (S)-malate + NAD(+) = pyruvate + CO2 + NADH. Activated by 2-ketoglutarate, phosphoenolpyruvate (PEP), fructose 1,6-biphosphate (FBP) and coenzyme A (acetyl-CoA and CoA) as homodimer and by oxaloacetate (OAA), 2-ketoglutarate, succinate, fumarate and CoA as heterodimer NAD-MEH. Repressed by succinate and fumarate as homodimer, in the presence of NAD(+) and competitively toward the substrate L-malate. Functionally, involved in the regulation of sugars and amino acids metabolisms during the night period. This is NAD-dependent malic enzyme 2, mitochondrial (NAD-ME2) from Arabidopsis thaliana (Mouse-ear cress).